A 60-amino-acid polypeptide reads, in one-letter code: Cytochrome c oxidase subunit 7, mitochondrial (60 aa).

Over 2–29 (ANKVIQLQKIFQSSTKPLWWRHPRSALY) the chain is Mitochondrial matrix. Residues 30-53 (LYPFYAIFAVAVVTPLLYIPNAIR) form a helical membrane-spanning segment. At 54–60 (GIKAKKA) the chain is on the mitochondrial intermembrane side.

The protein belongs to the cytochrome c oxidase VIIa family. In terms of assembly, component of the cytochrome c oxidase (complex IV, CIV), a multisubunit enzyme composed of 12 subunits. The complex is composed of a catalytic core of 3 subunits COX1, COX2 and COX3, encoded in the mitochondrial DNA, and 9 supernumerary subunits COX4, COX5A (or COX5B), COX6, COX7, COX8, COX9, COX12, COX13 and COX26, which are encoded in the nuclear genome. The complex exists as a monomer or a dimer and forms supercomplexes (SCs) in the inner mitochondrial membrane with a dimer of ubiquinol-cytochrome c oxidoreductase (cytochrome b-c1 complex, complex III, CIII), resulting in 2 different assemblies (supercomplexes III(2)IV and III(2)IV(2)).

Its subcellular location is the mitochondrion inner membrane. It participates in energy metabolism; oxidative phosphorylation. In terms of biological role, component of the cytochrome c oxidase, the last enzyme in the mitochondrial electron transport chain which drives oxidative phosphorylation. The respiratory chain contains 3 multisubunit complexes succinate dehydrogenase (complex II, CII), ubiquinol-cytochrome c oxidoreductase (cytochrome b-c1 complex, complex III, CIII) and cytochrome c oxidase (complex IV, CIV), that cooperate to transfer electrons derived from NADH and succinate to molecular oxygen, creating an electrochemical gradient over the inner membrane that drives transmembrane transport and the ATP synthase. Cytochrome c oxidase is the component of the respiratory chain that catalyzes the reduction of oxygen to water. Electrons originating from reduced cytochrome c in the intermembrane space (IMS) are transferred via the dinuclear copper A center (CU(A)) of COX2 and heme A of COX1 to the active site in COX1, a binuclear center (BNC) formed by heme A3 and copper B (CU(B)). The BNC reduces molecular oxygen to 2 water molecules using 4 electrons from cytochrome c in the IMS and 4 protons from the mitochondrial matrix. This chain is Cytochrome c oxidase subunit 7, mitochondrial (COX7), found in Saccharomyces cerevisiae (strain ATCC 204508 / S288c) (Baker's yeast).